We begin with the raw amino-acid sequence, 1369 residues long: Rho guanine nucleotide exchange factor 10 (1369 aa).

Positions 1 to 106 (MRPPGFLSRA…ETTPVAEPTK (106 aa)) are disordered. Acidic residues predominate over residues 46-64 (NNEEEEGEQFDFDSGDEIP). The span at 83–100 (EAPAPTGGEDGAGAETTP) shows a compositional bias: low complexity. The residue at position 180 (Ser180) is a Phosphoserine. The tract at residues 184–254 (EAETPEVTED…ENSDSEPDEM (71 aa)) is disordered. Positions 196–209 (PNSLSSEEPPTSED) are enriched in polar residues. Residues 304 to 355 (KKQLSHDLTRLKEHYEKKMRDLMASTVGVVEIQQLRQKHELKMQKLVKAAKD) adopt a coiled-coil conformation. Ser379 is modified (phosphoserine). A DH domain is found at 421–608 (VRRYILGSVV…ETLAEKLNER (188 aa)). Disordered regions lie at residues 1226–1260 (KDKSRDSLAPGPEPQDEDQKDALPSGGAGSSLSQG) and 1277–1297 (QKSDLSSSSGSLSLSHGSSSL). Positions 1279–1296 (SDLSSSSGSLSLSHGSSS) are enriched in low complexity. The residue at position 1287 (Ser1287) is a Phosphoserine. Gln1338 bears the N5-methylglutamine mark.

In terms of processing, methylated at Gln-1338 by N6AMT1.

Functionally, may play a role in developmental myelination of peripheral nerves. The sequence is that of Rho guanine nucleotide exchange factor 10 (ARHGEF10) from Homo sapiens (Human).